Here is a 192-residue protein sequence, read N- to C-terminus: MNYQIKRNTEETQLNISLANNGTQSHINTGVGFLDHMLTLFTFHSGLTLSIEATGDTYVDDHHITEDIGIVIGQLLLELVKTQQSFTRYGCSYVPMDETLARTVVDISGRPYFSFNSKLSAQKVGTFDTELVEEFFRALVINARLTVHIDLLRGGNTHHEIEAIFKSFARALKISLAQNEDGRIPSSKGVIE.

Belongs to the imidazoleglycerol-phosphate dehydratase family.

The protein resides in the cytoplasm. It carries out the reaction D-erythro-1-(imidazol-4-yl)glycerol 3-phosphate = 3-(imidazol-4-yl)-2-oxopropyl phosphate + H2O. It functions in the pathway amino-acid biosynthesis; L-histidine biosynthesis; L-histidine from 5-phospho-alpha-D-ribose 1-diphosphate: step 6/9. This is Imidazoleglycerol-phosphate dehydratase from Staphylococcus epidermidis (strain ATCC 12228 / FDA PCI 1200).